The following is a 128-amino-acid chain: 3-aminoacrylate deaminase RutC (128 aa).

It belongs to the RutC family.

It catalyses the reaction (Z)-3-aminoacrylate + H2O + H(+) = 3-oxopropanoate + NH4(+). In terms of biological role, involved in pyrimidine catabolism. Catalyzes the deamination of 3-aminoacrylate to malonic semialdehyde, a reaction that can also occur spontaneously. RutC may facilitate the reaction and modulate the metabolic fitness, rather than catalyzing essential functions. The chain is 3-aminoacrylate deaminase RutC from Enterobacter cloacae subsp. cloacae (strain ATCC 13047 / DSM 30054 / NBRC 13535 / NCTC 10005 / WDCM 00083 / NCDC 279-56).